We begin with the raw amino-acid sequence, 35 residues long: Neurotoxin (35 aa).

Cystine bridges form between cysteine 7–cysteine 27, cysteine 14–cysteine 32, and cysteine 18–cysteine 34.

As to expression, expressed by the venom gland.

The protein localises to the secreted. In terms of biological role, neurotoxin. Decreases the action potential of myelinated nerves in mice and frogs. The protein is Neurotoxin of Buthus sp. (strain IY-2001) (Scorpion).